The sequence spans 304 residues: tRNA dimethylallyltransferase (304 aa).

An ATP-binding site is contributed by 2 to 9; sequence GPTASGKT. 4–9 contributes to the substrate binding site; it reads TASGKT. 4 interaction with substrate tRNA regions span residues 27 to 30, 151 to 155, 232 to 237, and 265 to 272; these read DSAL, QRINR, RCVGYR, and KRQITWLR.

The protein belongs to the IPP transferase family. In terms of assembly, monomer. Mg(2+) serves as cofactor.

It catalyses the reaction adenosine(37) in tRNA + dimethylallyl diphosphate = N(6)-dimethylallyladenosine(37) in tRNA + diphosphate. Catalyzes the transfer of a dimethylallyl group onto the adenine at position 37 in tRNAs that read codons beginning with uridine, leading to the formation of N6-(dimethylallyl)adenosine (i(6)A). This is tRNA dimethylallyltransferase from Actinobacillus pleuropneumoniae serotype 5b (strain L20).